Here is a 411-residue protein sequence, read N- to C-terminus: Receptor GIN3 (411 aa).

The Extracellular portion of the chain corresponds to 1–99 (MSGFVAGEEA…LLPILPHPRN (99 aa)). Residues 100-120 (IPIIVPLFCVFTVMTSLAVGL) form a helical membrane-spanning segment. Residues 121-134 (RLWSRQKVAGGIRS) lie on the Cytoplasmic side of the membrane. The helical transmembrane segment at 135–155 (FDWLALAGFGLTIIYGAVSVY) threads the bilayer. Residues 156 to 181 (HSKVSGPYQAFYDRTWDQMKENYKVY) lie on the Extracellular side of the membrane. The chain crosses the membrane as a helical span at residues 182–202 (LVLTIMYPFIMGLIKISLLLF). Over 203 to 227 (YYRVATLNYVQWAVYATGSLTIANS) the chain is Cytoplasmic. Residues 228-248 (IAAIITHCLAFMPIDFWNHFL) traverse the membrane as a helical segment. The Extracellular portion of the chain corresponds to 249-262 (QSPFKFNSRTPMLV). The chain crosses the membrane as a helical span at residues 263-283 (FGAVYILTDVAILIIPMPMVF). At 284 to 292 (QLKLYPREK) the chain is on the cytoplasmic side. The helical transmembrane segment at 293–313 (VIAVIAFSLGGVACVASGFRI) threads the bilayer. Over 314–328 (WAIDEFQNYSGKNSS) the chain is Extracellular. Asn-321 and Asn-326 each carry an N-linked (GlcNAc...) asparagine glycan. The chain crosses the membrane as a helical span at residues 329–349 (GLMIDAWTMIELNLTLICASA). Residues 350 to 411 (PAIRALAIHY…QSPVIPKEVV (62 aa)) lie on the Cytoplasmic side of the membrane. A disordered region spans residues 371–411 (FSSSGATRGSKSAGSSGKSKTPESEKSMQVSQSPVIPKEVV). Positions 372–389 (SSSGATRGSKSAGSSGKS) are enriched in low complexity.

This sequence belongs to the SAT4 family. Interacts with guanine nucleotide-binding protein alpha GPA2; to activate adenylate cyclase and positively regulate nematode trap formation.

It localises to the cell membrane. In terms of biological role, receptor that senses nematode-derived signals at the cell surface and signals via adenylate cyclase to positively regulate trap formation for nematode capture. The sequence is that of Receptor GIN3 from Arthrobotrys oligospora (strain ATCC 24927 / CBS 115.81 / DSM 1491) (Nematode-trapping fungus).